Consider the following 160-residue polypeptide: Globin-like protein (160 aa).

The region spanning 2-152 (SMTRQEIQDL…FNAECQVHLK (151 aa)) is the Globin domain. His101 lines the heme pocket.

The protein belongs to the globin family.

It localises to the cytoplasm. May be a globin and may play a role in oxygen transport. This is Globin-like protein (glb-1) from Caenorhabditis briggsae.